The chain runs to 326 residues: MLIDGHGRTVDYLRVSVTERCNFRCQYCMPEKPFSWVPKENLLSFEELFLFMKVAMDEGVNKIRITGGEPLLREDLDSFIKMIHDYKPDIDLALTTNAYLLPQTAQKLKDAGLKRLNISLDSLKPEVAHQIAQKDVLGQVLKGIDKALEVGLGVKINMVPLKGINDNEILDVMEYCMDRNIKIRFIEYMENRHALEALKGMHGKEILSKVKEKYTIHALGREGASPSFNYTIEENGYEFGLIDPHKHDFCESCNRIRLTAEGFLIPCLYFDEALSIAEAVKKGDIEEASQVLATVLKDKPKENRWIEGELEEGQEVSSRAFYETGG.

Residues 5–227 (GHGRTVDYLR…ALGREGASPS (223 aa)) enclose the Radical SAM core domain. Residue R14 participates in GTP binding. Positions 21 and 25 each coordinate [4Fe-4S] cluster. Residue Y27 participates in S-adenosyl-L-methionine binding. Residue C28 participates in [4Fe-4S] cluster binding. R64 contributes to the GTP binding site. S-adenosyl-L-methionine is bound at residue G68. T95 contributes to the GTP binding site. S119 is a binding site for S-adenosyl-L-methionine. K155 contributes to the GTP binding site. M189 provides a ligand contact to S-adenosyl-L-methionine. [4Fe-4S] cluster contacts are provided by C250 and C253. GTP is bound at residue 255–257 (RIR). C267 lines the [4Fe-4S] cluster pocket.

This sequence belongs to the radical SAM superfamily. MoaA family. In terms of assembly, monomer and homodimer. It depends on [4Fe-4S] cluster as a cofactor.

It catalyses the reaction GTP + AH2 + S-adenosyl-L-methionine = (8S)-3',8-cyclo-7,8-dihydroguanosine 5'-triphosphate + 5'-deoxyadenosine + L-methionine + A + H(+). The protein operates within cofactor biosynthesis; molybdopterin biosynthesis. Its function is as follows. Catalyzes the cyclization of GTP to (8S)-3',8-cyclo-7,8-dihydroguanosine 5'-triphosphate. This is GTP 3',8-cyclase from Sulfurovum sp. (strain NBC37-1).